The following is a 231-amino-acid chain: S-norcoclaurine synthase 1 (231 aa).

Position 107-109 (107-109 (YKE)) interacts with dopamine. Catalysis depends on lysine 121, which acts as the Proton donor. Aspartate 140 contributes to the (4-hydroxyphenyl)acetaldehyde binding site. Residues 210-230 (LLLCLIICLVIAGGMFVAGVP) traverse the membrane as a helical segment.

It belongs to the BetVI family. In terms of tissue distribution, detected in roots, stems, leaves, flower buds and germinating seeds.

It localises to the membrane. The enzyme catalyses (4-hydroxyphenyl)acetaldehyde + dopamine = (S)-norcoclaurine + H2O. The protein operates within alkaloid biosynthesis; (S)-reticuline biosynthesis. With respect to regulation, activity doubles within 5 hours of elicitor treatment and continues to increase for at least 80 hours. Functionally, involved in the biosynthesis of (S)-coclaurine, the common precursor of all benzylisoquinoline alkaloids such as morphine, sanguinarine, codeine or papaverine. Condenses dopamine and 4-hydroxyphenylacetaldehyde. This Papaver somniferum (Opium poppy) protein is S-norcoclaurine synthase 1.